The following is a 1234-amino-acid chain: ATP-dependent helicase/nuclease subunit A (1234 aa).

One can recognise a UvrD-like helicase ATP-binding domain in the interval 9–482 (STWTDDQWEA…IDLNKNFRSR (474 aa)). 30–37 (AAAGSGKT) contributes to the ATP binding site. The UvrD-like helicase C-terminal domain occupies 509-800 (QAELKLGASY…RMMTIHSSKG (292 aa)).

Belongs to the helicase family. AddA subfamily. In terms of assembly, heterodimer of AddA and AddB/RexB. Mg(2+) is required as a cofactor.

The catalysed reaction is Couples ATP hydrolysis with the unwinding of duplex DNA by translocating in the 3'-5' direction.. It carries out the reaction ATP + H2O = ADP + phosphate + H(+). In terms of biological role, the heterodimer acts as both an ATP-dependent DNA helicase and an ATP-dependent, dual-direction single-stranded exonuclease. Recognizes the chi site generating a DNA molecule suitable for the initiation of homologous recombination. The AddA nuclease domain is required for chi fragment generation; this subunit has the helicase and 3' -&gt; 5' nuclease activities. In Bacillus pumilus (strain SAFR-032), this protein is ATP-dependent helicase/nuclease subunit A.